The following is an 82-amino-acid chain: uncharacterized protein (82 aa).

This is an uncharacterized protein from Dictyostelium discoideum (Social amoeba).